We begin with the raw amino-acid sequence, 400 residues long: Diphosphomevalonate decarboxylase (400 aa).

Residues 25–28 (YWGK), R80, 155–160 (SGSACR), and T211 each bind (R)-5-diphosphomevalonate.

The protein belongs to the diphosphomevalonate decarboxylase family. Homodimer.

Its subcellular location is the cytoplasm. The enzyme catalyses (R)-5-diphosphomevalonate + ATP = isopentenyl diphosphate + ADP + phosphate + CO2. It participates in steroid biosynthesis; cholesterol biosynthesis. Its function is as follows. Catalyzes the ATP dependent decarboxylation of (R)-5-diphosphomevalonate to form isopentenyl diphosphate (IPP). Functions in the mevalonate (MVA) pathway leading to isopentenyl diphosphate (IPP), a key precursor for the biosynthesis of isoprenoids and sterol synthesis. The polypeptide is Diphosphomevalonate decarboxylase (mvd) (Danio rerio (Zebrafish)).